Consider the following 1446-residue polypeptide: Centrosomal protein of 164 kDa (1446 aa).

An interaction with ATRIP region spans residues 1 to 195 (MARRPILLGD…PPQGLKAAAC (195 aa)). Residues 56–89 (APLPKGWKPCQNITGDLYYFNFDTGQSIWDHPCD) enclose the WW domain. 2 disordered regions span residues 106 to 132 (PGAI…SKSP) and 159 to 185 (PPSA…EPTL). Positions 109–121 (IKKKDKKKKKEKK) are enriched in basic residues. Over residues 164–176 (RGSQSVSLGSSAD) the composition is skewed to polar residues. Ser-202 carries the phosphoserine modification. Disordered stretches follow at residues 217 to 238 (EETN…SSEL), 250 to 408 (GGNF…SFLG), 424 to 570 (GDTL…EPAA), and 830 to 849 (KRQE…KEEH). The segment covering 218-228 (ETNEEDEEESD) has biased composition (acidic residues). Positions 257 to 277 (ESPRTSQPDKKDVSLDSDADR) are enriched in basic and acidic residues. Over residues 288-312 (GADSSVASANGSKSQGRGASPWNPQ) the composition is skewed to polar residues. 2 stretches are compositionally biased toward basic and acidic residues: residues 355–372 (KEGE…KEAS) and 384–397 (SEIH…RHSG). The span at 451-461 (SSIAEPQSKHT) shows a compositional bias: polar residues. 2 stretches are compositionally biased toward basic and acidic residues: residues 490–499 (PEWKEAEGPG) and 525–534 (ERAEEKHSQA). Positions 1143–1197 (EVLGNMRKNLNEETRHLDEMKSAMRKGHDLLKKKEEKLIQLESSLQEEVSDEDTL) form a coiled coil. Residues 1261-1287 (LGSLNSQPPPQGLGSQPPPPLFTSSLR) are disordered. Pro residues predominate over residues 1267–1281 (QPPPQGLGSQPPPPL). A phosphoserine mark is found at Ser-1369 and Ser-1371.

As to quaternary structure, interacts (via N-terminus) with ATRIP. Interacts with ATM, ATR and MDC1. Interacts with XPA (via N-terminus) upon UV irradiation. Interacts with CEP83, CCDC92, TTBK2, DVL3, NPHP3 and weakly with NPHP4. Interacts with DZIP1.

The protein resides in the cytoplasm. It localises to the cytoskeleton. The protein localises to the microtubule organizing center. Its subcellular location is the centrosome. It is found in the centriole. The protein resides in the nucleus. Plays a role in microtubule organization and/or maintenance for the formation of primary cilia (PC), a microtubule-based structure that protrudes from the surface of epithelial cells. Plays a critical role in G2/M checkpoint and nuclear divisions. A key player in the DNA damage-activated ATR/ATM signaling cascade since it is required for the proper phosphorylation of H2AX, RPA, CHEK2 and CHEK1. Plays a critical role in chromosome segregation, acting as a mediator required for the maintenance of genomic stability through modulation of MDC1, RPA and CHEK1. The polypeptide is Centrosomal protein of 164 kDa (Mus musculus (Mouse)).